A 168-amino-acid chain; its full sequence is Dihydrofolate reductase (168 aa).

A DHFR domain is found at 1 to 164; the sequence is MIIGIWAEDE…YTFTIKKYEK (164 aa). Residue 5–7 participates in substrate binding; the sequence is IWA. NADP(+)-binding positions include 6 to 7 and 14 to 19; these read WA and IGEADK. A substrate-binding site is contributed by glutamate 27. 43-46 lines the NADP(+) pocket; it reads GRKT. Residue arginine 58 participates in substrate binding. NADP(+) is bound by residues 63-66 and 99-104; these read LTRD and TGGAEI. Substrate is bound at residue threonine 118.

It belongs to the dihydrofolate reductase family.

It carries out the reaction (6S)-5,6,7,8-tetrahydrofolate + NADP(+) = 7,8-dihydrofolate + NADPH + H(+). Its pathway is cofactor biosynthesis; tetrahydrofolate biosynthesis; 5,6,7,8-tetrahydrofolate from 7,8-dihydrofolate: step 1/1. Functionally, key enzyme in folate metabolism. Catalyzes an essential reaction for de novo glycine and purine synthesis, and for DNA precursor synthesis. The chain is Dihydrofolate reductase (folA) from Lactococcus lactis subsp. lactis (strain IL1403) (Streptococcus lactis).